The following is a 37-amino-acid chain: Mating pheromone Er-20 (37 aa).

Disulfide bonds link C3–C18, C10–C32, and C15–C24.

In terms of assembly, homodimer.

Its subcellular location is the secreted. Functionally, mating ciliate pheromones (or gamones) are diffusible extracellular communication signals that distinguish different intraspecific classes of cells commonly referred to as 'mating types'. They prepare the latter for conjugation by changing their cell surface properties. This is Mating pheromone Er-20 (MAT20) from Euplotes raikovi.